Consider the following 142-residue polypeptide: Large ribosomal subunit protein uL11 (142 aa).

This sequence belongs to the universal ribosomal protein uL11 family. Part of the ribosomal stalk of the 50S ribosomal subunit. Interacts with L10 and the large rRNA to form the base of the stalk. L10 forms an elongated spine to which L12 dimers bind in a sequential fashion forming a multimeric L10(L12)X complex. One or more lysine residues are methylated.

Functionally, forms part of the ribosomal stalk which helps the ribosome interact with GTP-bound translation factors. The chain is Large ribosomal subunit protein uL11 from Dichelobacter nodosus (strain VCS1703A).